A 98-amino-acid polypeptide reads, in one-letter code: Major carboxysome shell protein CsoS1A (98 aa).

The BMC domain occupies 8 to 93 (ALGMIETRGL…VHSEVENILP (86 aa)).

Belongs to the bacterial microcompartments protein family. CsoS1 subfamily. In terms of assembly, homohexamer with a small central pore; the concave side is mostly positive electrostatic potential, whereas the convex side is mostly negative electrostatic potential. Forms a CsoS2-CsoS1-RuBisCO complex. Interacts with the N-terminus (residues 1-136) of RuBisCO (CbbL).

It localises to the carboxysome. Functionally, the major shell protein of the carboxysome, a polyhedral inclusion where RuBisCO (ribulose bisphosphate carboxylase, ccbL-ccbS) is sequestered. Assembles into hexamers which make sheets that form the facets of the polyhedral carboxysome. The shell probably limits the diffusion of CO(2) into and out of the carboxysome. Molecular modeling shows the central pore of this protein is selectively permeable to anions such as HCO(3) rather than CO(2) or O(2). There are estimated to be 2970 CsoS1A/CsoS1C proteins per carboxysome (the proteins differ by only 1 residue). In terms of biological role, unlike beta-carboxysomes, alpha-carboxysomes (Cb) can form without cargo protein. CsoS2 is essential for Cb formation and is also capable of targeting foreign proteins to the Cb. The Cb shell assembles with the aid of CsoS2; CsoS1A, CsoS1B and CsoS1C form the majority of the shell while CsoS4A and CsoS4B form vertices. CsoS1D forms pseudohexamers that probably control metabolite flux into and out of the shell. This is Major carboxysome shell protein CsoS1A from Halothiobacillus neapolitanus (strain ATCC 23641 / c2) (Thiobacillus neapolitanus).